The following is a 1283-amino-acid chain: Oxysterol-binding protein homolog 2 (1283 aa).

At S2 the chain carries N-acetylserine. S7 carries the phosphoserine modification. ANK repeat units follow at residues N106–D134 and T206–V235. A PH domain is found at P289–R386. Phosphoserine is present on residues S422, S445, S451, S455, S458, S459, and S486. The residue at position 488 (T488) is a Phosphothreonine. Composition is skewed to polar residues over residues S504–G518 and A530–I551. 2 disordered regions span residues S504–N571 and T702–A721. Residues S512 and S515 each carry the phosphoserine modification. A compositionally biased stretch (acidic residues) spans F554–L568. Residues E707 to E716 are compositionally biased toward basic and acidic residues. Residue S717 is modified to Phosphoserine. Positions E745–E751 match the FFAT motif. Residues S767–K834 are disordered. T783 is subject to Phosphothreonine. Phosphoserine is present on S787. 2 stretches are compositionally biased toward basic and acidic residues: residues Q791–K810 and D818–K834. A phosphoserine mark is found at S825 and S1151. The tract at residues S897–W1268 is OSBP-related domain (ORD).

It belongs to the OSBP family. In terms of assembly, interacts with SCS2.

It localises to the cell membrane. Its subcellular location is the endoplasmic reticulum membrane. Its function is as follows. Lipid transport protein (LTP) involved in non-vesicular transfer of lipids between membranes. Functions in phosphoinositide-coupled directional transport of various lipids by carrying the lipid molecule in a hydrophobic pocket and transferring it between membranes through the cytosol. Involved in maintenance of intracellular sterol distribution and homeostasis. Binds and transports sterol. Plays a role in the positive regulation of vesicular transport of ceramide from the ER to the Golgi, negatively regulating COPII-mediated ER export of cargos. The polypeptide is Oxysterol-binding protein homolog 2 (Saccharomyces cerevisiae (strain ATCC 204508 / S288c) (Baker's yeast)).